A 628-amino-acid chain; its full sequence is DNA mismatch repair protein MutL (628 aa).

The segment at 332–416 (PTSAMPAPGN…ASTAPPLSEE (85 aa)) is disordered. Over residues 375 to 396 (EGSSRSDVPYPSASQVTETTDS) the composition is skewed to polar residues.

This sequence belongs to the DNA mismatch repair MutL/HexB family.

Its function is as follows. This protein is involved in the repair of mismatches in DNA. It is required for dam-dependent methyl-directed DNA mismatch repair. May act as a 'molecular matchmaker', a protein that promotes the formation of a stable complex between two or more DNA-binding proteins in an ATP-dependent manner without itself being part of a final effector complex. The protein is DNA mismatch repair protein MutL of Syntrophotalea carbinolica (strain DSM 2380 / NBRC 103641 / GraBd1) (Pelobacter carbinolicus).